The sequence spans 139 residues: MAIEKTLSILKPDAVKNNITGKINSYIESSGLKIIAQKMMLLTKKQAELFYEIHKDRPFFGELVEFMTSGSVIVQVLVGENAVSKYRQIMGATNPKQADKGTIRGDFADDISENRVHGSDSLENARKEIAFFFAECELV.

6 residues coordinate ATP: Lys11, Phe59, Arg87, Thr93, Arg104, and Asn114. Residue His117 is the Pros-phosphohistidine intermediate of the active site.

This sequence belongs to the NDK family. In terms of assembly, homotetramer. It depends on Mg(2+) as a cofactor.

Its subcellular location is the cytoplasm. It catalyses the reaction a 2'-deoxyribonucleoside 5'-diphosphate + ATP = a 2'-deoxyribonucleoside 5'-triphosphate + ADP. The catalysed reaction is a ribonucleoside 5'-diphosphate + ATP = a ribonucleoside 5'-triphosphate + ADP. Major role in the synthesis of nucleoside triphosphates other than ATP. The ATP gamma phosphate is transferred to the NDP beta phosphate via a ping-pong mechanism, using a phosphorylated active-site intermediate. The chain is Nucleoside diphosphate kinase from Wolbachia sp. subsp. Drosophila simulans (strain wRi).